The chain runs to 214 residues: Auxin-binding protein ABP20 (214 aa).

The first 23 residues, M1–A23, serve as a signal peptide directing secretion. The cysteines at positions 29 and 44 are disulfide-linked. In terms of domain architecture, Cupin type-1 spans S58–K204. N-linked (GlcNAc...) asparagine glycosylation occurs at N65. H106, H108, E113, and H152 together coordinate Mn(2+).

Belongs to the germin family. In terms of assembly, interacts with ABP19.

The protein resides in the secreted. It is found in the extracellular space. Its subcellular location is the apoplast. The protein localises to the cell wall. Probable receptor for the plant growth-promoting hormone auxin. The polypeptide is Auxin-binding protein ABP20 (ABP20) (Prunus persica (Peach)).